The following is a 217-amino-acid chain: Probable transaldolase (217 aa).

The active-site Schiff-base intermediate with substrate is the Lys83.

It belongs to the transaldolase family. Type 3B subfamily.

It localises to the cytoplasm. It catalyses the reaction D-sedoheptulose 7-phosphate + D-glyceraldehyde 3-phosphate = D-erythrose 4-phosphate + beta-D-fructose 6-phosphate. Its pathway is carbohydrate degradation; pentose phosphate pathway; D-glyceraldehyde 3-phosphate and beta-D-fructose 6-phosphate from D-ribose 5-phosphate and D-xylulose 5-phosphate (non-oxidative stage): step 2/3. Its function is as follows. Transaldolase is important for the balance of metabolites in the pentose-phosphate pathway. The protein is Probable transaldolase of Caldicellulosiruptor saccharolyticus (strain ATCC 43494 / DSM 8903 / Tp8T 6331).